The sequence spans 275 residues: Methylglyoxal reductase DkgA (275 aa).

Catalysis depends on Tyr51, which acts as the Proton donor. His107 is a substrate binding site. 187–241 (SPLAQGGKGVFDQKVIRDLADKYGKTPAQIVIRWHLDSGLVVIPKSVTPSRIAEN) is an NADP(+) binding site.

This sequence belongs to the aldo/keto reductase family. Monomer.

Its subcellular location is the cytoplasm. The enzyme catalyses hydroxyacetone + NADP(+) = methylglyoxal + NADPH + H(+). In terms of biological role, aldo-keto reductase that significantly contributes to cellular methylglyoxal detoxification by catalyzing the NADPH-dependent conversion of methylglyoxal to acetol. The sequence is that of Methylglyoxal reductase DkgA from Escherichia coli O157:H7.